Consider the following 204-residue polypeptide: MKLSGLYLVTKDYYNGNFFNIVEESLSAGVNILQYRDKTNPYNIKIEAGRRLKNLAYKYNVPFIVDDSPVLLDILDADGIHIGKDDPPFEYIKERFPGKIIGVSTYGDINLGIKYERLGADYIAFGSFFKTSTKDDAEMCDINILNNASKFNIPVFAIGGINTRNVDELLKYKISGIAVVSAIFDAANPGEATRTFLEKLRKIL.

4-amino-2-methyl-5-(diphosphooxymethyl)pyrimidine contacts are provided by residues Q34–K38 and D66. 2 residues coordinate Mg(2+): D67 and D86. S104 provides a ligand contact to 4-amino-2-methyl-5-(diphosphooxymethyl)pyrimidine. Residue T131–T133 coordinates 2-[(2R,5Z)-2-carboxy-4-methylthiazol-5(2H)-ylidene]ethyl phosphate. K134 is a binding site for 4-amino-2-methyl-5-(diphosphooxymethyl)pyrimidine. 2-[(2R,5Z)-2-carboxy-4-methylthiazol-5(2H)-ylidene]ethyl phosphate contacts are provided by residues G160 and V180 to S181.

The protein belongs to the thiamine-phosphate synthase family. Requires Mg(2+) as cofactor.

The catalysed reaction is 2-[(2R,5Z)-2-carboxy-4-methylthiazol-5(2H)-ylidene]ethyl phosphate + 4-amino-2-methyl-5-(diphosphooxymethyl)pyrimidine + 2 H(+) = thiamine phosphate + CO2 + diphosphate. The enzyme catalyses 2-(2-carboxy-4-methylthiazol-5-yl)ethyl phosphate + 4-amino-2-methyl-5-(diphosphooxymethyl)pyrimidine + 2 H(+) = thiamine phosphate + CO2 + diphosphate. It carries out the reaction 4-methyl-5-(2-phosphooxyethyl)-thiazole + 4-amino-2-methyl-5-(diphosphooxymethyl)pyrimidine + H(+) = thiamine phosphate + diphosphate. Its pathway is cofactor biosynthesis; thiamine diphosphate biosynthesis; thiamine phosphate from 4-amino-2-methyl-5-diphosphomethylpyrimidine and 4-methyl-5-(2-phosphoethyl)-thiazole: step 1/1. In terms of biological role, condenses 4-methyl-5-(beta-hydroxyethyl)thiazole monophosphate (THZ-P) and 2-methyl-4-amino-5-hydroxymethyl pyrimidine pyrophosphate (HMP-PP) to form thiamine monophosphate (TMP). This chain is Thiamine-phosphate synthase, found in Picrophilus torridus (strain ATCC 700027 / DSM 9790 / JCM 10055 / NBRC 100828 / KAW 2/3).